Reading from the N-terminus, the 418-residue chain is Magnesium transporter MRS2-E (418 aa).

Residues 119–146 are disordered; the sequence is DAAPSTNPAAADRGNGTEQGDQGSVPGL. Positions 166-232 form a coiled coil; the sequence is VCLEHACKDL…RDELEHLLDD (67 aa). Residues 258–268 are compositionally biased toward basic and acidic residues; it reads DSHKYASVDHD. Residues 258–287 are disordered; that stretch reads DSHKYASVDHDDDREEEDHDDETESGRESS. A compositionally biased stretch (acidic residues) spans 269-280; sequence DDREEEDHDDET. A helical membrane pass occupies residues 344 to 364; it reads GVMLTTATVVVTAGIVVVSLF. Residues 365–367 carry the Required for magnesium transport activity motif; it reads GMN. The helical transmembrane segment at 389–409 threads the bilayer; sequence FWETTFGTVAGCIAIYLLAIY.

The protein belongs to the CorA metal ion transporter (MIT) (TC 1.A.35.5) family.

It is found in the membrane. Its function is as follows. Magnesium transporter that may mediate the influx of magnesium. The polypeptide is Magnesium transporter MRS2-E (MRS2-E) (Oryza sativa subsp. indica (Rice)).